Here is a 308-residue protein sequence, read N- to C-terminus: GTP cyclohydrolase FolE2 (308 aa).

It belongs to the GTP cyclohydrolase IV family.

The catalysed reaction is GTP + H2O = 7,8-dihydroneopterin 3'-triphosphate + formate + H(+). The protein operates within cofactor biosynthesis; 7,8-dihydroneopterin triphosphate biosynthesis; 7,8-dihydroneopterin triphosphate from GTP: step 1/1. In terms of biological role, converts GTP to 7,8-dihydroneopterin triphosphate. In Colwellia psychrerythraea (strain 34H / ATCC BAA-681) (Vibrio psychroerythus), this protein is GTP cyclohydrolase FolE2.